We begin with the raw amino-acid sequence, 918 residues long: Probable lipoxygenase 6 (918 aa).

The disordered stretch occupies residues 56–76 (AASPSSGIKGGGAGERRPAPE). The PLAT domain occupies 90–218 (QKEDIKEAVA…ELPTKRVFFS (129 aa)). Positions 221 to 918 (PYLPSETPPG…CRGVPNSISI (698 aa)) constitute a Lipoxygenase domain. Fe cation-binding residues include His573, His578, His765, Asn769, and Ile918.

The protein belongs to the lipoxygenase family. Fe cation is required as a cofactor.

It catalyses the reaction (9Z,12Z)-octadecadienoate + O2 = (13S)-hydroperoxy-(9Z,11E)-octadecadienoate. The catalysed reaction is (9Z,12Z,15Z)-octadecatrienoate + O2 = (13S)-hydroperoxy-(9Z,11E,15Z)-octadecatrienoate. The protein operates within lipid metabolism; oxylipin biosynthesis. Its function is as follows. Plant lipoxygenase may be involved in a number of diverse aspects of plant physiology including growth and development, pest resistance, and senescence or responses to wounding. Catalyzes the hydroperoxidation of lipids containing a cis,cis-1,4-pentadiene structure. The chain is Probable lipoxygenase 6 from Oryza sativa subsp. japonica (Rice).